A 482-amino-acid polypeptide reads, in one-letter code: Proline--tRNA ligase (482 aa).

This sequence belongs to the class-II aminoacyl-tRNA synthetase family. ProS type 3 subfamily. In terms of assembly, homodimer.

It is found in the cytoplasm. It carries out the reaction tRNA(Pro) + L-proline + ATP = L-prolyl-tRNA(Pro) + AMP + diphosphate. Functionally, catalyzes the attachment of proline to tRNA(Pro) in a two-step reaction: proline is first activated by ATP to form Pro-AMP and then transferred to the acceptor end of tRNA(Pro). The sequence is that of Proline--tRNA ligase from Natronomonas pharaonis (strain ATCC 35678 / DSM 2160 / CIP 103997 / JCM 8858 / NBRC 14720 / NCIMB 2260 / Gabara) (Halobacterium pharaonis).